A 351-amino-acid polypeptide reads, in one-letter code: Nicotinate-nucleotide--dimethylbenzimidazole phosphoribosyltransferase (351 aa).

The active-site Proton acceptor is the glutamate 317.

It belongs to the CobT family.

It catalyses the reaction 5,6-dimethylbenzimidazole + nicotinate beta-D-ribonucleotide = alpha-ribazole 5'-phosphate + nicotinate + H(+). It functions in the pathway nucleoside biosynthesis; alpha-ribazole biosynthesis; alpha-ribazole from 5,6-dimethylbenzimidazole: step 1/2. Catalyzes the synthesis of alpha-ribazole-5'-phosphate from nicotinate mononucleotide (NAMN) and 5,6-dimethylbenzimidazole (DMB). The polypeptide is Nicotinate-nucleotide--dimethylbenzimidazole phosphoribosyltransferase (Ectopseudomonas mendocina (strain ymp) (Pseudomonas mendocina)).